The following is a 750-amino-acid chain: Photosystem I P700 chlorophyll a apoprotein A1 (750 aa).

8 consecutive transmembrane segments (helical) span residues 70 to 93 (VFSA…FHGA), 156 to 179 (LYCT…FHYH), 195 to 219 (LNHH…HVSL), 291 to 309 (IAHH…GHMY), 346 to 369 (WHAQ…HHMY), 385 to 411 (LSLF…IFMV), 433 to 455 (AIIS…LYIH), and 531 to 549 (FLVH…LILL). Cysteine 573 and cysteine 582 together coordinate [4Fe-4S] cluster. Helical transmembrane passes span 589-610 (HVFL…HFSW) and 664-686 (LSAY…MFLF). A chlorophyll a'-binding site is contributed by histidine 675. Residues methionine 683 and tyrosine 691 each coordinate chlorophyll a. Position 692 (tryptophan 692) interacts with phylloquinone. The helical transmembrane segment at 724–744 (AVGVTHYLLGGIATTWAFFLA) threads the bilayer.

Belongs to the PsaA/PsaB family. As to quaternary structure, the PsaA/B heterodimer binds the P700 chlorophyll special pair and subsequent electron acceptors. PSI consists of a core antenna complex that captures photons, and an electron transfer chain that converts photonic excitation into a charge separation. The eukaryotic PSI reaction center is composed of at least 11 subunits. It depends on P700 is a chlorophyll a/chlorophyll a' dimer, A0 is one or more chlorophyll a, A1 is one or both phylloquinones and FX is a shared 4Fe-4S iron-sulfur center. as a cofactor.

It localises to the plastid. The protein resides in the chloroplast thylakoid membrane. The catalysed reaction is reduced [plastocyanin] + hnu + oxidized [2Fe-2S]-[ferredoxin] = oxidized [plastocyanin] + reduced [2Fe-2S]-[ferredoxin]. Functionally, psaA and PsaB bind P700, the primary electron donor of photosystem I (PSI), as well as the electron acceptors A0, A1 and FX. PSI is a plastocyanin-ferredoxin oxidoreductase, converting photonic excitation into a charge separation, which transfers an electron from the donor P700 chlorophyll pair to the spectroscopically characterized acceptors A0, A1, FX, FA and FB in turn. Oxidized P700 is reduced on the lumenal side of the thylakoid membrane by plastocyanin. The sequence is that of Photosystem I P700 chlorophyll a apoprotein A1 from Calycanthus floridus var. glaucus (Eastern sweetshrub).